A 309-amino-acid chain; its full sequence is MNTNTQTEQQIIREETRIDKIIKKRKKKMRAQVLLCPTITAYGRLYCAPRRLHRYNSSSSSSQFLNLNLSRFSGALFFHMEQFQSGTGSSGKRGMVENLKRYGVISSKRVAQVMEALDRGLFVPVGSSAYVDTPVPIGYNATISAPHMHATCLQLLEDKLHPGMRALDVGSGTGYLTGCFALMVGAEGRVVGVDHIPELVDMSIKNIEKSVAASFLKKGSLSLHVGDGRKGWQEFAPYDAIHVGAAASEIPQPLLDQLKPGGRMVIPLGTYFQELKVIDKNEDGSIKVHTETSVRYVPLTSRVEQLGGF.

The short motif at 23–28 is the Nuclear localization signal element; it reads KKRKKK. Ser144 is an active-site residue.

Belongs to the methyltransferase superfamily. L-isoaspartyl/D-aspartyl protein methyltransferase family. As to expression, expressed in rosette leaves, stems, cauline leaves, flowers and developing seeds.

It is found in the nucleus. It carries out the reaction [protein]-L-isoaspartate + S-adenosyl-L-methionine = [protein]-L-isoaspartate alpha-methyl ester + S-adenosyl-L-homocysteine. Catalyzes the methyl esterification of L-isoaspartyl residues in peptides and proteins that result from spontaneous decomposition of normal L-aspartyl and L-asparaginyl residues. It plays a role in the repair and/or degradation of damaged proteins. The sequence is that of Protein-L-isoaspartate O-methyltransferase 2 (PIMT2) from Arabidopsis thaliana (Mouse-ear cress).